Here is a 463-residue protein sequence, read N- to C-terminus: uncharacterized protein (463 aa).

The TRAM domain maps to 12–70 (LWQQGSVVELTITGLNHQGEGIGRFNERVVFVPDTAPGDRLEVRLVKVKRNYALAQLLK). Cys-83, Cys-89, Cys-92, and Cys-171 together coordinate [4Fe-4S] cluster. Residues Gln-295, Tyr-324, Glu-345, and Asp-390 each coordinate S-adenosyl-L-methionine. The active-site Nucleophile is the Cys-417.

Belongs to the class I-like SAM-binding methyltransferase superfamily. RNA M5U methyltransferase family.

This is an uncharacterized protein from Synechocystis sp. (strain ATCC 27184 / PCC 6803 / Kazusa).